Reading from the N-terminus, the 702-residue chain is Putative endo-beta-N-acetylglucosaminidase (702 aa).

Positions 1–23 are cleaved as a signal peptide; that stretch reads MKKVRFIFLALLFFLASPEGAMA. Cell wall-binding repeat units follow at residues 42-63, 65-84, 86-105, 124-145, 147-166, 185-206, 208-227, 229-248, 250-271, 273-292, 294-315, 317-336, 338-359, 361-380, and 382-403; these read ANEW…DANY, ENEW…GGYM, KSEW…DGKM, IEDW…DGQH, EKEW…GGYL, QQGW…NGNY, DKEW…GGYM, ANEW…DGKI, EKEW…GGYM, and ANEW…DGKM.

It belongs to the glycosyl hydrolase 73 family.

The protein localises to the secreted. The catalysed reaction is an N(4)-(oligosaccharide-(1-&gt;3)-[oligosaccharide-(1-&gt;6)]-beta-D-Man-(1-&gt;4)-beta-D-GlcNAc-(1-&gt;4)-alpha-D-GlcNAc)-L-asparaginyl-[protein] + H2O = an oligosaccharide-(1-&gt;3)-[oligosaccharide-(1-&gt;6)]-beta-D-Man-(1-&gt;4)-D-GlcNAc + N(4)-(N-acetyl-beta-D-glucosaminyl)-L-asparaginyl-[protein]. Functionally, plays an important role in cell wall degradation and cell separation. This chain is Putative endo-beta-N-acetylglucosaminidase (lytB), found in Streptococcus pneumoniae (strain ATCC BAA-255 / R6).